We begin with the raw amino-acid sequence, 134 residues long: Histone H2A (134 aa).

Gly residues predominate over residues 1-10; sequence MTGGKSGGKA. The tract at residues 1–24 is disordered; that stretch reads MTGGKSGGKASGSKNAQSRSSKAG. Residues Lys-5 and Lys-9 each carry the N6-acetyllysine modification. Gln-106 carries the N5-methylglutamine modification. The tract at residues 115–134 is disordered; it reads QNLLPKKTPKSGKGPGSQEL. At Ser-131 the chain carries Phosphoserine. The short motif at 131–132 is the [ST]-Q motif element; the sequence is SQ.

It belongs to the histone H2A family. The nucleosome is a histone octamer containing two molecules each of H2A, H2B, H3 and H4 assembled in one H3-H4 heterotetramer and two H2A-H2B heterodimers. The octamer wraps approximately 147 bp of DNA. Phosphorylated to form H2AS128ph (gamma-H2A) in response to DNA double-strand breaks (DSBs) generated by exogenous genotoxic agents and by stalled replication forks. Phosphorylation is dependent on the DNA damage checkpoint kinases mec1/ATR and tel1/ATM, spreads on either side of a detected DSB site and may mark the surrounding chromatin for recruitment of proteins required for DNA damage signaling and repair. Gamma-H2A is removed from the DNA prior to the strand invasion-primer extension step of the repair process and subsequently dephosphorylated. Dephosphorylation is necessary for efficient recovery from the DNA damage checkpoint. In terms of processing, acetylated by esa1 to form H2AK4ac and H2AK7ac.

Its subcellular location is the nucleus. It is found in the chromosome. Its function is as follows. Core component of nucleosome which plays a central role in DNA double strand break (DSB) repair. Nucleosomes wrap and compact DNA into chromatin, limiting DNA accessibility to the cellular machineries which require DNA as a template. Histones thereby play a central role in transcription regulation, DNA repair, DNA replication and chromosomal stability. DNA accessibility is regulated via a complex set of post-translational modifications of histones, also called histone code, and nucleosome remodeling. The sequence is that of Histone H2A (httA) from Aspergillus niger (strain ATCC MYA-4892 / CBS 513.88 / FGSC A1513).